A 202-amino-acid chain; its full sequence is Orotate phosphoribosyltransferase (202 aa).

5-phospho-alpha-D-ribose 1-diphosphate contacts are provided by residues K93 and E113 to S121. Orotate contacts are provided by T117 and R145.

It belongs to the purine/pyrimidine phosphoribosyltransferase family. PyrE subfamily. As to quaternary structure, homodimer. Mg(2+) is required as a cofactor.

The enzyme catalyses orotidine 5'-phosphate + diphosphate = orotate + 5-phospho-alpha-D-ribose 1-diphosphate. The protein operates within pyrimidine metabolism; UMP biosynthesis via de novo pathway; UMP from orotate: step 1/2. Catalyzes the transfer of a ribosyl phosphate group from 5-phosphoribose 1-diphosphate to orotate, leading to the formation of orotidine monophosphate (OMP). The protein is Orotate phosphoribosyltransferase of Campylobacter jejuni subsp. jejuni serotype O:2 (strain ATCC 700819 / NCTC 11168).